A 198-amino-acid chain; its full sequence is Dual specificity protein phosphatase 13B (198 aa).

In terms of domain architecture, Tyrosine-protein phosphatase spans 45-193 (HINEVWPNLF…LQVLDNRLRR (149 aa)). Cysteine 138 serves as the catalytic Phosphocysteine intermediate.

This sequence belongs to the protein-tyrosine phosphatase family. Non-receptor class dual specificity subfamily. In terms of tissue distribution, most abundantly expressed in the testis.

It catalyses the reaction O-phospho-L-tyrosyl-[protein] + H2O = L-tyrosyl-[protein] + phosphate. It carries out the reaction O-phospho-L-seryl-[protein] + H2O = L-seryl-[protein] + phosphate. The catalysed reaction is O-phospho-L-threonyl-[protein] + H2O = L-threonyl-[protein] + phosphate. Dual specificity phosphatase that dephosphorylates MAPK8/JNK and MAPK14/p38, but not MAPK1/ERK2, in vitro. Exhibits intrinsic phosphatase activity towards both phospho-seryl/threonyl and -tyrosyl residues, with similar specific activities in vitro. The sequence is that of Dual specificity protein phosphatase 13B from Mus musculus (Mouse).